Consider the following 476-residue polypeptide: Sulfate adenylyltransferase subunit 1 (476 aa).

The 216-residue stretch at 24–239 (KSLLRFLTCG…LLETVDVDHE (216 aa)) folds into the tr-type G domain. Residues 33 to 40 (GSVDDGKS) form a G1 region. 33–40 (GSVDDGKS) is a binding site for GTP. The G2 stretch occupies residues 91–95 (GITID). Positions 112 to 115 (DTPG) are G3. Residues 112-116 (DTPGH) and 167-170 (NKMD) each bind GTP. The segment at 167-170 (NKMD) is G4. Residues 205–207 (SAL) form a G5 region.

It belongs to the TRAFAC class translation factor GTPase superfamily. Classic translation factor GTPase family. CysN/NodQ subfamily. As to quaternary structure, heterodimer composed of CysD, the smaller subunit, and CysN.

It catalyses the reaction sulfate + ATP + H(+) = adenosine 5'-phosphosulfate + diphosphate. It functions in the pathway sulfur metabolism; hydrogen sulfide biosynthesis; sulfite from sulfate: step 1/3. Functionally, with CysD forms the ATP sulfurylase (ATPS) that catalyzes the adenylation of sulfate producing adenosine 5'-phosphosulfate (APS) and diphosphate, the first enzymatic step in sulfur assimilation pathway. APS synthesis involves the formation of a high-energy phosphoric-sulfuric acid anhydride bond driven by GTP hydrolysis by CysN coupled to ATP hydrolysis by CysD. This is Sulfate adenylyltransferase subunit 1 from Vibrio campbellii (strain ATCC BAA-1116).